A 243-amino-acid polypeptide reads, in one-letter code: Ubiquinone/menaquinone biosynthesis C-methyltransferase UbiE (243 aa).

S-adenosyl-L-methionine-binding positions include Thr69, Asp90, and 116–117 (DA).

It belongs to the class I-like SAM-binding methyltransferase superfamily. MenG/UbiE family.

It catalyses the reaction a 2-demethylmenaquinol + S-adenosyl-L-methionine = a menaquinol + S-adenosyl-L-homocysteine + H(+). It carries out the reaction a 2-methoxy-6-(all-trans-polyprenyl)benzene-1,4-diol + S-adenosyl-L-methionine = a 5-methoxy-2-methyl-3-(all-trans-polyprenyl)benzene-1,4-diol + S-adenosyl-L-homocysteine + H(+). It functions in the pathway quinol/quinone metabolism; menaquinone biosynthesis; menaquinol from 1,4-dihydroxy-2-naphthoate: step 2/2. It participates in cofactor biosynthesis; ubiquinone biosynthesis. In terms of biological role, methyltransferase required for the conversion of demethylmenaquinol (DMKH2) to menaquinol (MKH2) and the conversion of 2-polyprenyl-6-methoxy-1,4-benzoquinol (DDMQH2) to 2-polyprenyl-3-methyl-6-methoxy-1,4-benzoquinol (DMQH2). The protein is Ubiquinone/menaquinone biosynthesis C-methyltransferase UbiE of Cupriavidus taiwanensis (strain DSM 17343 / BCRC 17206 / CCUG 44338 / CIP 107171 / LMG 19424 / R1) (Ralstonia taiwanensis (strain LMG 19424)).